The following is a 364-amino-acid chain: DNA polymerase IV (364 aa).

The UmuC domain occupies 14 to 198; that stretch reads IIHIDMDAFF…LPIEKFHGVG (185 aa). 2 residues coordinate Mg(2+): Asp-18 and Asp-116. The active site involves Glu-117.

Belongs to the DNA polymerase type-Y family. Monomer. It depends on Mg(2+) as a cofactor.

It localises to the cytoplasm. It catalyses the reaction DNA(n) + a 2'-deoxyribonucleoside 5'-triphosphate = DNA(n+1) + diphosphate. Its function is as follows. Poorly processive, error-prone DNA polymerase involved in untargeted mutagenesis. Copies undamaged DNA at stalled replication forks, which arise in vivo from mismatched or misaligned primer ends. These misaligned primers can be extended by PolIV. Exhibits no 3'-5' exonuclease (proofreading) activity. May be involved in translesional synthesis, in conjunction with the beta clamp from PolIII. The sequence is that of DNA polymerase IV from Streptococcus pyogenes serotype M5 (strain Manfredo).